The following is a 313-amino-acid chain: Ribosomal RNA small subunit methyltransferase H (313 aa).

S-adenosyl-L-methionine contacts are provided by residues 35 to 37 (GGH), Asp55, Phe79, Asp101, and Gln108.

It belongs to the methyltransferase superfamily. RsmH family.

It is found in the cytoplasm. The catalysed reaction is cytidine(1402) in 16S rRNA + S-adenosyl-L-methionine = N(4)-methylcytidine(1402) in 16S rRNA + S-adenosyl-L-homocysteine + H(+). Functionally, specifically methylates the N4 position of cytidine in position 1402 (C1402) of 16S rRNA. The protein is Ribosomal RNA small subunit methyltransferase H of Erwinia tasmaniensis (strain DSM 17950 / CFBP 7177 / CIP 109463 / NCPPB 4357 / Et1/99).